Here is a 343-residue protein sequence, read N- to C-terminus: Palmitoyltransferase ZDHHC4 (343 aa).

The Lumenal portion of the chain corresponds to 1 to 2; sequence MD. A helical membrane pass occupies residues 3–23; it reads FLVLFSFYLAFLLICVIMICI. Over 24–67 the chain is Cytoplasmic; that stretch reads FTKSQRLKAVVLGGAQVCARVTPQCFQRAVQTLLHQLFHTRHPA. A helical membrane pass occupies residues 68–88; it reads FLALHLLLQGLVYAEYTYEVF. The Lumenal portion of the chain corresponds to 89 to 95; sequence SYCRELE. A helical transmembrane segment spans residues 96 to 116; sequence FSLPCLLLPYVLLSVNLVFFT. The Cytoplasmic segment spans residues 117–193; sequence LTCSTNPGTI…NCIGAWNTGY (77 aa). The DHHC domain occupies 149-199; the sequence is SRCSTCDLRKPARSKHCRVCDRCVHRFDHHCVWVNNCIGAWNTGYFLIYLL. Residue Cys179 is the S-palmitoyl cysteine intermediate of the active site. A helical transmembrane segment spans residues 194-214; the sequence is FLIYLLTLTASAATIAILSAA. Over 215–255 the chain is Lumenal; it reads FLLRLVAVSNLYQETYLDDLGRFQAVDTGFLIQHLFLAFPR. The chain crosses the membrane as a helical span at residues 256-276; the sequence is IIFLLGFVIVLSLLLAGYLCF. At 277 to 343 the chain is on the cytoplasmic side; that stretch reads ALYLAATNQT…ATPSYKKKKR (67 aa). Residues 340–343 carry the Di-lysine motif motif; that stretch reads KKKR.

Belongs to the DHHC palmitoyltransferase family. As to quaternary structure, interacts with CPT1A.

The protein resides in the endoplasmic reticulum membrane. Its subcellular location is the golgi apparatus membrane. It is found in the cell membrane. The enzyme catalyses L-cysteinyl-[protein] + hexadecanoyl-CoA = S-hexadecanoyl-L-cysteinyl-[protein] + CoA. Palmitoyltransferase that could catalyze the addition of palmitate onto protein substrates including the D(2) dopamine receptor DRD2, GSK3B or MAVS. Mediates GSK3B palmitoylation to prevent its AKT1-mediated phosphorylation leading to activation of the STAT3 signaling pathway. Also catalyzes MAVS palmitoylation which promotes its stabilization and activation by inhibiting 'Lys-48'- but facilitating 'Lys-63'-linked ubiquitination. This Rattus norvegicus (Rat) protein is Palmitoyltransferase ZDHHC4.